The sequence spans 527 residues: MEMATTFTHDVTTSGKPLLLFLILITLTYSLGIVFYRLFRHPLAKFPGPRIAAATYLYEIAFDYFGNGAYLFEIERMHHKYGPIVRLNPAELSIKDGEFYDKVYVNGNVRRTEALPSFGDGMDFNNSHGMTVDHHQHRQRRKPLEPFFSKAGVARFESNLASVVSTLVDRLRDYEGTGSVLRLDHAFAALAGDIITTMCIDSTSMTFLDDKDFSRGWYELFHTLIISMPVFMNFPWIIRLVRLIPTSILKRVDPRSQMFRDWSDMSVAEIKKSLQRKATGEMLTYQKGIIKAPTLFDHLVNSDLPTSDMSVERLASEAQVLMGAGTVTTAQSMSHLVVNVLLRPDVEKRLREEFAVLMKQLGEASLPKARELEKLPYLQACVKEGLRLSHGLMHRLPRISPDVALEFNGLIIPPGTPVGMSAYFMHMDETVYENPREFIPERWLGDVDPKMDRNYVPFSRGSRRCLAPNLAYTEISMVMAALFSPWSPAIRLQDTNASDVDPVCAFLLPLPRLDSKGVRVIVRKNKE.

Residues 15 to 35 form a helical membrane-spanning segment; it reads GKPLLLFLILITLTYSLGIVF. N-linked (GlcNAc...) asparagine glycosylation occurs at N125. C465 serves as a coordination point for heme. The N-linked (GlcNAc...) asparagine glycan is linked to N496.

The protein belongs to the cytochrome P450 family. Heme is required as a cofactor.

It is found in the membrane. The protein operates within mycotoxin biosynthesis. Functionally, cytochrome P450 monooxygenase; part of the gene cluster that mediates the biosynthesis of the diterpene glucoside brassicicene C. In the first step of the brassicicene C biosynthesis, the bifunctional diterpene synthase bsc8 that possesses both prenyl transferase and terpene cyclase activity, converts isopentenyl diphosphate and dimethylallyl diphosphate into geranylgeranyl diphosphate (GGDP) that is further converted into fusicocca-2,10(14)-diene, the first precursor for brassicicene C. Fusicocca-2,10(14)-diene is then substrate of cytochrome P450 monooxygenase bsc1 for hydroxylation at the C-8 position. Oxidation at C-16 position to aldehyde is then catalyzed by the cytochrome P450 monooyxygenase bsc7, yielding fusicocca-2,10(14)-diene-8-beta,16-diol. Follows the isomerization of the double bond and reduction of aldehyde to alcohol catalyzed by the short-chain dehydrogenase/reductase bsc3 to yield the diol compound fusicocca-1,10(14)-diene-8 beta,16-diol. The next step is the oxidation at the C-3 position of fusicocca-2,10(14)-diene-8-beta,16-diol catalyzed by the alpha-ketoglutarate dependent dioxygenase bsc9, to produce a triol compound. Methylation of the hydroxy group at position 16 is performed by the methyltransferase bsc6. 16-O-methylation is followed by oxidation at the C-13 position to ketone and an alkyl shift of the methyl group leads to brassicicene C. Although the probable acetyltransferase bsc4 is included in the gene cluster, no acetylation reactions are necessary for brassicicene C biosynthesis. However, the fact that brassicicene E, which is a structurally related compound having an acetoxy group at position 12, was previously isolated from another strain of A.brassicicola suggests that the ATCC 96836 strain might also produce a small amount of brassicicene E. The chain is Fusicoccadiene C-8 hydroxylase from Alternaria brassicicola (Dark leaf spot agent).